Here is a 454-residue protein sequence, read N- to C-terminus: Asparagine--tRNA ligase (454 aa).

Belongs to the class-II aminoacyl-tRNA synthetase family. Homodimer.

The protein localises to the cytoplasm. It catalyses the reaction tRNA(Asn) + L-asparagine + ATP = L-asparaginyl-tRNA(Asn) + AMP + diphosphate + H(+). This chain is Asparagine--tRNA ligase, found in Microcystis aeruginosa (strain NIES-843 / IAM M-2473).